Consider the following 310-residue polypeptide: Bifunctional phosphoglucose/phosphomannose isomerase (310 aa).

Positions 22–152 (FDGSFRTGTF…IRPKHEDIEE (131 aa)) constitute an SIS domain. Positions 41, 42, 80, 82, 85, and 128 each coordinate D-fructose 6-phosphate. Glutamate 202 functions as the Proton acceptor in the catalytic mechanism. Residues histidine 218 and lysine 306 each coordinate D-fructose 6-phosphate. Histidine 218 functions as the Proton donor in the catalytic mechanism. Catalysis depends on lysine 306, which acts as the Proton acceptor.

It belongs to the PGI/PMI family. In terms of assembly, homodimer.

The catalysed reaction is alpha-D-glucose 6-phosphate = beta-D-fructose 6-phosphate. The enzyme catalyses D-mannose 6-phosphate = D-fructose 6-phosphate. Inhibited by low concentrations of erythrose 4-phosphate and 6-phosphogluconate. Dual specificity isomerase that catalyzes the isomerization of both glucose-6-phosphate and mannose-6-phosphate to fructose-6-phosphate with similar catalytic efficiency. This chain is Bifunctional phosphoglucose/phosphomannose isomerase, found in Thermoplasma acidophilum (strain ATCC 25905 / DSM 1728 / JCM 9062 / NBRC 15155 / AMRC-C165).